The following is a 435-amino-acid chain: Glutamyl-tRNA reductase (435 aa).

Residues threonine 49–arginine 52, serine 109, glutamate 114–glutamine 116, and glutamine 120 each bind substrate. Cysteine 50 functions as the Nucleophile in the catalytic mechanism. Position 198–203 (glycine 198–serine 203) interacts with NADP(+).

This sequence belongs to the glutamyl-tRNA reductase family. As to quaternary structure, homodimer.

The catalysed reaction is (S)-4-amino-5-oxopentanoate + tRNA(Glu) + NADP(+) = L-glutamyl-tRNA(Glu) + NADPH + H(+). The protein operates within porphyrin-containing compound metabolism; protoporphyrin-IX biosynthesis; 5-aminolevulinate from L-glutamyl-tRNA(Glu): step 1/2. Its pathway is porphyrin-containing compound metabolism; chlorophyll biosynthesis. Its function is as follows. Catalyzes the NADPH-dependent reduction of glutamyl-tRNA(Glu) to glutamate 1-semialdehyde (GSA). This is Glutamyl-tRNA reductase from Prochlorococcus marinus (strain MIT 9211).